Here is a 411-residue protein sequence, read N- to C-terminus: Squalene synthase (411 aa).

2 helical membrane-spanning segments follow: residues serine 281–tyrosine 301 and serine 388–glycine 408.

The protein belongs to the phytoene/squalene synthase family. The cofactor is Mg(2+).

It is found in the endoplasmic reticulum membrane. The enzyme catalyses 2 (2E,6E)-farnesyl diphosphate + NADPH + H(+) = squalene + 2 diphosphate + NADP(+). It catalyses the reaction 2 (2E,6E)-farnesyl diphosphate + NADH + H(+) = squalene + 2 diphosphate + NAD(+). Its pathway is terpene metabolism; lanosterol biosynthesis; lanosterol from farnesyl diphosphate: step 1/3. This chain is Squalene synthase, found in Nicotiana benthamiana.